Reading from the N-terminus, the 329-residue chain is uncharacterized protein (329 aa).

2 coiled-coil regions span residues 57–119 (KKEE…LQEV) and 224–250 (AQRQ…LGNV).

This is an uncharacterized protein from Macaca fascicularis (Crab-eating macaque).